The sequence spans 355 residues: MTALKNDRFLRALLKQPVDVTPVWMMRQAGRYLPEYRATRAKAGDFMSLCMNPELACEVTLQPLDRYPQLDAAILFSDILTIPDAMGQGLYFETGEGPRFRKVVSSLADIEALPVPDPEQDLGYVMDAVRTIRRELNGRVPLIGFSGSPWTLATYMVEGGSSKDFRKSKAMLYDNPKAMHALLDKLAQSVTSYLNGQIRAGAQAVQIFDSWGGSLSAAAYQEFSLVYMRKIVDGLIREHDGRRVPVILFTKGGGLWLESMAEVGAEALGLDWTCDIGSARARVGERVALQGNMDPSVLYANPAAIRAEVARILAAYGKGTGHVFNLGHGITPEVDPAHAGAFFEAVHELSAQYHG.

Residues 27 to 31 (RQAGR), Asp-78, Tyr-155, Ser-210, and His-328 contribute to the substrate site.

It belongs to the uroporphyrinogen decarboxylase family. Homodimer.

It localises to the cytoplasm. It catalyses the reaction uroporphyrinogen III + 4 H(+) = coproporphyrinogen III + 4 CO2. Its pathway is porphyrin-containing compound metabolism; protoporphyrin-IX biosynthesis; coproporphyrinogen-III from 5-aminolevulinate: step 4/4. In terms of biological role, catalyzes the decarboxylation of four acetate groups of uroporphyrinogen-III to yield coproporphyrinogen-III. The protein is Uroporphyrinogen decarboxylase of Pseudomonas aeruginosa (strain UCBPP-PA14).